The primary structure comprises 395 residues: Torsin-3A (395 aa).

Residues 1 to 24 form the signal peptide; the sequence is MFFGAFWLLLLLLLPPLRPPGAQG. The N-linked (GlcNAc...) asparagine glycan is linked to Asn-120. 165-172 is a binding site for ATP; that stretch reads GWSGTGKN.

This sequence belongs to the ClpA/ClpB family. Torsin subfamily. As to quaternary structure, may not form homohexamers. Post-translationally, N-glycosylated.

It is found in the cytoplasm. Its subcellular location is the endoplasmic reticulum lumen. This chain is Torsin-3A (Tor3a), found in Rattus norvegicus (Rat).